The chain runs to 384 residues: Protein cutoff (384 aa).

Belongs to the DXO/Dom3Z family. As to quaternary structure, component of the Rhino-Deadlock-Cutoff (RDC) complex, composed of rhi/rhino, del/deadlock and cuff/cutoff. Interacts with rhi/rhino; this interaction is indirect and is mediated by del/deadlock. Interacts with del/deadlock (via C-terminal); this interaction is direct. Interacts with Rat1.

It is found in the cytoplasm. The protein localises to the nucleus. The protein resides in the chromosome. In terms of biological role, involved in the piRNA pathway in germline tissues. Part of the Rhino-Deadlock-Cutoff (RDC) complex that stimulates piRNA biogenesis from chromatin regions corresponding to dual-strand, but not single-stranded, piRNA clusters. Promotes transcription of long piRNA precursors by preventing termination at canonical poly(A) sites. As part of the RDC complex, is recruited to chromatin enriched in histone modification H3K9me3 and might contribute to complex interaction by binding nascent transcript nucleic acid chains. Associates with chromatin upon exposure to homologous piRNA. Suppresses cleavage at canonical poly(A) sites by blocking recruitment of the cleavage and polyadenylation specificity factor (CPSF) complex and prevents transcriptional termination by RNA polymerase II, facilitating transcriptional read-through. As part of the RDC complex, involved in suppression of splicing. Catalytically inactive, lacking 5'-3' exonuclease and pyrophosphohydrolase activities. Stabilizes uncapped piRNA precursors in the nucleus, probably by sequestering or blocking the exonuclease activity of Rat1. May also be involved in siRNA biogenesis from dual-strand piRNA clusters. This Drosophila melanogaster (Fruit fly) protein is Protein cutoff (cuff).